A 289-amino-acid polypeptide reads, in one-letter code: Toxin tox21A (289 aa).

The first 14 residues, 1 to 14 (MNLYFLFFISTILA), serve as a signal peptide directing secretion. The propeptide occupies 15 to 27 (AKPFNSFNKTSLI). The interval 270 to 289 (DKDITVHENAGDPKSDSRRC) is disordered.

Post-translationally, contains several disulfide bonds. Posterior glands which appear to be connected with the stylet through a series of ducts.

Its subcellular location is the secreted. Its function is as follows. Has contracting-paralyzing activity in insect larvae. The protein is Toxin tox21A of Pyemotes tritici (Straw itch mite).